A 299-amino-acid polypeptide reads, in one-letter code: ATP phosphoribosyltransferase (299 aa).

It belongs to the ATP phosphoribosyltransferase family. Long subfamily. Mg(2+) serves as cofactor.

It is found in the cytoplasm. The enzyme catalyses 1-(5-phospho-beta-D-ribosyl)-ATP + diphosphate = 5-phospho-alpha-D-ribose 1-diphosphate + ATP. Its pathway is amino-acid biosynthesis; L-histidine biosynthesis; L-histidine from 5-phospho-alpha-D-ribose 1-diphosphate: step 1/9. Its activity is regulated as follows. Feedback inhibited by histidine. Its function is as follows. Catalyzes the condensation of ATP and 5-phosphoribose 1-diphosphate to form N'-(5'-phosphoribosyl)-ATP (PR-ATP). Has a crucial role in the pathway because the rate of histidine biosynthesis seems to be controlled primarily by regulation of HisG enzymatic activity. In Pasteurella multocida (strain Pm70), this protein is ATP phosphoribosyltransferase (hisG).